A 313-amino-acid chain; its full sequence is NF-kappa-B inhibitor delta (313 aa).

ANK repeat units follow at residues 48 to 83, 84 to 113, 117 to 146, 152 to 201, 206 to 236, and 243 to 276; these read EGDT…IREH, KGKT…EPNA, QGRS…QVDL, EGLT…NHTS, SNKT…DLRT, and HGNT…DPTL.

This sequence belongs to the NF-kappa-B inhibitor family. In terms of assembly, interacts with NFKB1, RELA and RELB; in the nucleus.

It is found in the nucleus. Its function is as follows. Regulates the expression of IL-2, IL-6, and other cytokines through regulation on NF-kappa-B activity. Functions in the regulation of inflammatory responses. Involved in the induction of T helper 17 cells (Th17) differentiation upon recognition of antigen by T cell antigen receptor (TCR). May also regulate TCR-induced negative selection of thymocytes. The chain is NF-kappa-B inhibitor delta (NFKBID) from Homo sapiens (Human).